A 331-amino-acid chain; its full sequence is Holliday junction branch migration complex subunit RuvB (331 aa).

The interval 1–178 (MRNSIFEQEE…FGITLRLDFY (178 aa)) is large ATPase domain (RuvB-L). ATP contacts are provided by residues Leu-17, Arg-18, Gly-59, Lys-62, Thr-63, Thr-64, 125-127 (EDY), Arg-168, Tyr-178, and Arg-215. Residue Thr-63 participates in Mg(2+) binding. The interval 179–249 (TVSELLQLLQ…FADLALNKME (71 aa)) is small ATPAse domain (RuvB-S). Residues 252-331 (QFGLDKLDYT…LSTINSARLP (80 aa)) are head domain (RuvB-H). Residues Arg-307 and Arg-312 each contribute to the DNA site.

This sequence belongs to the RuvB family. Homohexamer. Forms an RuvA(8)-RuvB(12)-Holliday junction (HJ) complex. HJ DNA is sandwiched between 2 RuvA tetramers; dsDNA enters through RuvA and exits via RuvB. An RuvB hexamer assembles on each DNA strand where it exits the tetramer. Each RuvB hexamer is contacted by two RuvA subunits (via domain III) on 2 adjacent RuvB subunits; this complex drives branch migration. In the full resolvosome a probable DNA-RuvA(4)-RuvB(12)-RuvC(2) complex forms which resolves the HJ.

It is found in the cytoplasm. The enzyme catalyses ATP + H2O = ADP + phosphate + H(+). Functionally, the RuvA-RuvB-RuvC complex processes Holliday junction (HJ) DNA during genetic recombination and DNA repair, while the RuvA-RuvB complex plays an important role in the rescue of blocked DNA replication forks via replication fork reversal (RFR). RuvA specifically binds to HJ cruciform DNA, conferring on it an open structure. The RuvB hexamer acts as an ATP-dependent pump, pulling dsDNA into and through the RuvAB complex. RuvB forms 2 homohexamers on either side of HJ DNA bound by 1 or 2 RuvA tetramers; 4 subunits per hexamer contact DNA at a time. Coordinated motions by a converter formed by DNA-disengaged RuvB subunits stimulates ATP hydrolysis and nucleotide exchange. Immobilization of the converter enables RuvB to convert the ATP-contained energy into a lever motion, pulling 2 nucleotides of DNA out of the RuvA tetramer per ATP hydrolyzed, thus driving DNA branch migration. The RuvB motors rotate together with the DNA substrate, which together with the progressing nucleotide cycle form the mechanistic basis for DNA recombination by continuous HJ branch migration. Branch migration allows RuvC to scan DNA until it finds its consensus sequence, where it cleaves and resolves cruciform DNA. The polypeptide is Holliday junction branch migration complex subunit RuvB (Neorickettsia sennetsu (strain ATCC VR-367 / Miyayama) (Ehrlichia sennetsu)).